Reading from the N-terminus, the 541-residue chain is Chaperonin GroEL 1 (541 aa).

ATP-binding positions include 29 to 32 (TIGP), 86 to 90 (DGTTT), Gly415, 479 to 481 (NAA), and Asp495.

This sequence belongs to the chaperonin (HSP60) family. Forms a cylinder of 14 subunits composed of two heptameric rings stacked back-to-back. Interacts with the co-chaperonin GroES.

It is found in the cytoplasm. It carries out the reaction ATP + H2O + a folded polypeptide = ADP + phosphate + an unfolded polypeptide.. In terms of biological role, together with its co-chaperonin GroES, plays an essential role in assisting protein folding. The GroEL-GroES system forms a nano-cage that allows encapsulation of the non-native substrate proteins and provides a physical environment optimized to promote and accelerate protein folding. The chain is Chaperonin GroEL 1 from Streptomyces coelicolor (strain ATCC BAA-471 / A3(2) / M145).